Reading from the N-terminus, the 244-residue chain is Leucyl/phenylalanyl-tRNA--protein transferase (244 aa).

Positions 1-22 (MHSQPYLLSPAPNNTPFPPAEH) are disordered.

This sequence belongs to the L/F-transferase family.

It localises to the cytoplasm. The catalysed reaction is N-terminal L-lysyl-[protein] + L-leucyl-tRNA(Leu) = N-terminal L-leucyl-L-lysyl-[protein] + tRNA(Leu) + H(+). It catalyses the reaction N-terminal L-arginyl-[protein] + L-leucyl-tRNA(Leu) = N-terminal L-leucyl-L-arginyl-[protein] + tRNA(Leu) + H(+). The enzyme catalyses L-phenylalanyl-tRNA(Phe) + an N-terminal L-alpha-aminoacyl-[protein] = an N-terminal L-phenylalanyl-L-alpha-aminoacyl-[protein] + tRNA(Phe). Functionally, functions in the N-end rule pathway of protein degradation where it conjugates Leu, Phe and, less efficiently, Met from aminoacyl-tRNAs to the N-termini of proteins containing an N-terminal arginine or lysine. This is Leucyl/phenylalanyl-tRNA--protein transferase from Xylella fastidiosa (strain M12).